Consider the following 242-residue polypeptide: Venom nerve growth factor 3 (242 aa).

Residues 1-18 (MSMLCYTLIIAFLIGIWA) form the signal peptide. A propeptide spanning residues 19–125 (APKSEDNVPL…ALNRNIRSKR (107 aa)) is cleaved from the precursor. The segment covering 48–66 (LKTSRNTDQRHPAPKKAED) has biased composition (basic and acidic residues). The tract at residues 48-69 (LKTSRNTDQRHPAPKKAEDQEL) is disordered. 3 cysteine pairs are disulfide-bonded: C139/C203, C181/C231, and C191/C233. N147 carries an N-linked (GlcNAc...) asparagine glycan.

Belongs to the NGF-beta family. Homodimer; non-covalently linked. Expressed by the venom gland.

Its subcellular location is the secreted. Functionally, nerve growth factor is important for the development and maintenance of the sympathetic and sensory nervous systems. It stimulates division and differentiation of sympathetic and embryonic sensory neurons as well as basal forebrain cholinergic neurons in the brain. Its relevance in the snake venom is not clear. However, it has been shown to inhibit metalloproteinase-dependent proteolysis of platelet glycoprotein Ib alpha, suggesting a metalloproteinase inhibition to prevent metalloprotease autodigestion and/or protection against prey proteases. Binds a lipid between the two protein chains in the homodimer. The lipid-bound form promotes histamine relase from mouse mast cells, contrary to the lipid-free form. This chain is Venom nerve growth factor 3, found in Demansia vestigiata (Lesser black whip snake).